The primary structure comprises 833 residues: Protein translocase subunit SecA (833 aa).

Residues Q87, 105–109 (GEGKT), and D494 contribute to the ATP site. A disordered region spans residues 789–816 (PAAVAYSGGEAEAGPAQPHREDPKVGRN). The segment covering 806–815 (PHREDPKVGR) has biased composition (basic and acidic residues). Residues C819, C821, C830, and C831 each contribute to the Zn(2+) site.

Belongs to the SecA family. Monomer and homodimer. Part of the essential Sec protein translocation apparatus which comprises SecA, SecYEG and auxiliary proteins SecDF-YajC and YidC. Zn(2+) serves as cofactor.

It is found in the cell inner membrane. Its subcellular location is the cytoplasm. The enzyme catalyses ATP + H2O + cellular proteinSide 1 = ADP + phosphate + cellular proteinSide 2.. Part of the Sec protein translocase complex. Interacts with the SecYEG preprotein conducting channel. Has a central role in coupling the hydrolysis of ATP to the transfer of proteins into and across the cell membrane, serving as an ATP-driven molecular motor driving the stepwise translocation of polypeptide chains across the membrane. The chain is Protein translocase subunit SecA from Nitratidesulfovibrio vulgaris (strain ATCC 29579 / DSM 644 / CCUG 34227 / NCIMB 8303 / VKM B-1760 / Hildenborough) (Desulfovibrio vulgaris).